Here is a 178-residue protein sequence, read N- to C-terminus: Large ribosomal subunit protein uL6 (178 aa).

This sequence belongs to the universal ribosomal protein uL6 family. In terms of assembly, part of the 50S ribosomal subunit.

Its function is as follows. This protein binds to the 23S rRNA, and is important in its secondary structure. It is located near the subunit interface in the base of the L7/L12 stalk, and near the tRNA binding site of the peptidyltransferase center. The sequence is that of Large ribosomal subunit protein uL6 from Streptococcus pneumoniae serotype 4 (strain ATCC BAA-334 / TIGR4).